The primary structure comprises 204 residues: N-(5'-phosphoribosyl)anthranilate isomerase (204 aa).

It belongs to the TrpF family.

The enzyme catalyses N-(5-phospho-beta-D-ribosyl)anthranilate = 1-(2-carboxyphenylamino)-1-deoxy-D-ribulose 5-phosphate. Its pathway is amino-acid biosynthesis; L-tryptophan biosynthesis; L-tryptophan from chorismate: step 3/5. The protein is N-(5'-phosphoribosyl)anthranilate isomerase of Oceanobacillus iheyensis (strain DSM 14371 / CIP 107618 / JCM 11309 / KCTC 3954 / HTE831).